A 267-amino-acid chain; its full sequence is MNDINPAFVMPDVQSSPDTRQIPIQRVGVKGVRYPVTLKTPAGIMPSVGTFNLDVHLPADQKGTHMSRFVALLEEERAPLELSSFRLMLDKMLEKLEAEAGRIEVTFPYFISKTAPVSGVESLLDYEVTLTGEVRDGAARVFLKALVPVTSLCPCSKKISQYGAHNQRSHITMNVELAGELPVEALVRMAEEEASCELWGLLKRPDEKFVTERAYENPKFVEDLVRDIAMRLNADDRIVAYVLEAENFESIHNHSAYAVIERDKRVD.

Belongs to the GTP cyclohydrolase IV family.

The enzyme catalyses GTP + H2O = 7,8-dihydroneopterin 3'-triphosphate + formate + H(+). Its pathway is cofactor biosynthesis; 7,8-dihydroneopterin triphosphate biosynthesis; 7,8-dihydroneopterin triphosphate from GTP: step 1/1. In terms of biological role, converts GTP to 7,8-dihydroneopterin triphosphate. This chain is GTP cyclohydrolase FolE2, found in Cupriavidus necator (strain ATCC 17699 / DSM 428 / KCTC 22496 / NCIMB 10442 / H16 / Stanier 337) (Ralstonia eutropha).